The primary structure comprises 150 residues: Cytochrome b5 type B (150 aa).

A propeptide spanning residues 1 to 15 is cleaved from the precursor; it reads MSGSMATAEASGSDG. The interval 1–20 is disordered; the sequence is MSGSMATAEASGSDGKGQEV. The residue at position 23 (S23) is a Phosphoserine. Residues 24–100 enclose the Cytochrome b5 heme-binding domain; the sequence is VTYYRLEEVA…LKQYYIGDIH (77 aa). K34 bears the N6-acetyllysine mark. S37 is subject to Phosphoserine. K39 carries the post-translational modification N6-methyllysine. Heme contacts are provided by H59 and H83. S84 is subject to Phosphoserine. Residues 123-140 form a helical membrane-spanning segment; the sequence is WAYWILPIIGAVLLGFLY.

The protein belongs to the cytochrome b5 family. Component of a complex composed of cytochrome b5, NADH-cytochrome b5 reductase (CYB5R3) and MTARC2.

It localises to the mitochondrion outer membrane. Cytochrome b5 is a membrane-bound hemoprotein functioning as an electron carrier for several membrane-bound oxygenases. This Homo sapiens (Human) protein is Cytochrome b5 type B (CYB5B).